The sequence spans 123 residues: MNNNFKRTDRIAEMIQRKLALIIPQEIKDPRLKGFVTISAVKVAADLGHAKIYFTVLNEDKSVVTNILNGAASYLRSALARSITLRTVPQLHFIYDESIEYGQRLSRLIDEVNPPDSSSDDNN.

This sequence belongs to the RbfA family. In terms of assembly, monomer. Binds 30S ribosomal subunits, but not 50S ribosomal subunits or 70S ribosomes.

It localises to the cytoplasm. One of several proteins that assist in the late maturation steps of the functional core of the 30S ribosomal subunit. Associates with free 30S ribosomal subunits (but not with 30S subunits that are part of 70S ribosomes or polysomes). Required for efficient processing of 16S rRNA. May interact with the 5'-terminal helix region of 16S rRNA. This chain is Ribosome-binding factor A, found in Legionella pneumophila (strain Lens).